We begin with the raw amino-acid sequence, 156 residues long: Flagellar assembly factor FliW (156 aa).

The protein belongs to the FliW family. As to quaternary structure, interacts with translational regulator CsrA and flagellin(s).

It is found in the cytoplasm. In terms of biological role, acts as an anti-CsrA protein, binds CsrA and prevents it from repressing translation of its target genes, one of which is flagellin. Binds to flagellin and participates in the assembly of the flagellum. The protein is Flagellar assembly factor FliW of Lachnoclostridium phytofermentans (strain ATCC 700394 / DSM 18823 / ISDg) (Clostridium phytofermentans).